A 139-amino-acid chain; its full sequence is ATP synthase epsilon chain (139 aa).

The tract at residues 89 to 110 is disordered; it reads EARAEQARAEAEARRREAQSER.

The protein belongs to the ATPase epsilon chain family. In terms of assembly, F-type ATPases have 2 components, CF(1) - the catalytic core - and CF(0) - the membrane proton channel. CF(1) has five subunits: alpha(3), beta(3), gamma(1), delta(1), epsilon(1). CF(0) has three main subunits: a, b and c.

It localises to the cell membrane. In terms of biological role, produces ATP from ADP in the presence of a proton gradient across the membrane. The protein is ATP synthase epsilon chain of Chloroflexus aurantiacus (strain ATCC 29366 / DSM 635 / J-10-fl).